The sequence spans 285 residues: Probable endonuclease 4 (285 aa).

H69, H109, E145, D179, H182, H216, D229, H231, and E261 together coordinate Zn(2+).

Belongs to the AP endonuclease 2 family. It depends on Zn(2+) as a cofactor.

The catalysed reaction is Endonucleolytic cleavage to 5'-phosphooligonucleotide end-products.. In terms of biological role, endonuclease IV plays a role in DNA repair. It cleaves phosphodiester bonds at apurinic or apyrimidinic (AP) sites, generating a 3'-hydroxyl group and a 5'-terminal sugar phosphate. The sequence is that of Probable endonuclease 4 from Shigella dysenteriae serotype 1 (strain Sd197).